The primary structure comprises 969 residues: Surface protein P113 (969 aa).

Positions 1–22 are cleaved as a signal peptide; sequence MKIPFFILHILLLQFLLCLIRC. N-linked (GlcNAc...) asparagine glycosylation occurs at asparagine 207. Residues 223–328 are disordered; that stretch reads IGDESTDSSS…TDTLVNNKEN (106 aa). A compositionally biased stretch (polar residues) spans 229–241; sequence DSSSMEIQDSTSN. N-linked (GlcNAc...) asparagine glycosylation is present at asparagine 268. Positions 300 to 311 are enriched in basic and acidic residues; that stretch reads KNEDNKDLEHGS. Over residues 312–325 the composition is skewed to low complexity; the sequence is SNDVNNNTDTLVNN. Residues asparagine 317, asparagine 360, asparagine 661, and asparagine 697 are each glycosylated (N-linked (GlcNAc...) asparagine). Over residues 688 to 705 the composition is skewed to polar residues; that stretch reads SSNFNIFDSNNTDQNNEQ. The interval 688 to 947 is disordered; the sequence is SSNFNIFDSN…NETNKTDNGS (260 aa). Low complexity predominate over residues 713 to 727; it reads QLLNNNNDDVLSESN. Residues 728 to 749 are compositionally biased toward basic and acidic residues; sequence NENKEKTSDDATHKETQEKSDQ. Asparagine 779 carries an N-linked (GlcNAc...) asparagine glycan. Residues 798-811 are compositionally biased toward acidic residues; it reads EGTEELQQNDEDAE. Over residues 812–822 the composition is skewed to basic and acidic residues; sequence SLTKENSKSEE. Positions 823-841 are enriched in acidic residues; sequence QENEDSTDAEAIDKEEVET. A compositionally biased stretch (basic and acidic residues) spans 842–854; sequence EEKGKDEQKKDEQ. The segment covering 855 to 864 has biased composition (acidic residues); the sequence is KEQDEEEDGE. N-linked (GlcNAc...) asparagine glycosylation occurs at asparagine 876. Residues 883-896 are compositionally biased toward basic and acidic residues; it reads EENKNEVKGEEHLQ. The span at 897–907 shows a compositional bias: low complexity; the sequence is GSEQSIEASES. The segment covering 908–917 has biased composition (basic and acidic residues); it reads SQKDETKETE. The segment covering 918–936 has biased composition (acidic residues); it reads DKEEYVNANDDESSEEDTT. Residues 937-947 are compositionally biased toward polar residues; it reads PNETNKTDNGS. Residues asparagine 938, asparagine 941, and asparagine 945 are each glycosylated (N-linked (GlcNAc...) asparagine). Residue asparagine 945 is the site of GPI-anchor amidated asparagine attachment. A propeptide spans 946-969 (removed in mature form); sequence GSSFFFAMSNALLVILLLLFIEFL.

As to quaternary structure, forms a complex composed of RH5, P113 and human BSG/basigin; the complex bridges the merozoite and host erythrocyte membranes. Within the complex, interacts with RH5 (via N-terminus); the interaction tethers RH5 to the merozoite membrane.

The protein resides in the cell membrane. Membrane receptor which tethers secreted RH5 to the merozoite membrane during merozoite invasion of host erythocytes. The polypeptide is Surface protein P113 (Plasmodium falciparum (isolate 3D7)).